Here is a 187-residue protein sequence, read N- to C-terminus: Ribonuclease HII (187 aa).

The region spanning 1–187 (MIILGIDEAG…YKPVQVLLNE (187 aa)) is the RNase H type-2 domain. A divalent metal cation contacts are provided by aspartate 7, glutamate 8, and aspartate 99.

The protein belongs to the RNase HII family. Requires Mn(2+) as cofactor. Mg(2+) is required as a cofactor.

The protein resides in the cytoplasm. It carries out the reaction Endonucleolytic cleavage to 5'-phosphomonoester.. Functionally, endonuclease that specifically degrades the RNA of RNA-DNA hybrids. This chain is Ribonuclease HII, found in Francisella tularensis subsp. holarctica (strain FTNF002-00 / FTA).